The chain runs to 86 residues: Small ribosomal subunit protein uS17 (86 aa).

The protein belongs to the universal ribosomal protein uS17 family. As to quaternary structure, part of the 30S ribosomal subunit.

Functionally, one of the primary rRNA binding proteins, it binds specifically to the 5'-end of 16S ribosomal RNA. This chain is Small ribosomal subunit protein uS17, found in Bifidobacterium longum (strain DJO10A).